Consider the following 1049-residue polypeptide: Vacuolar membrane protease (1049 aa).

Residues 1–11 (MKCYNPSAFVP) lie on the Cytoplasmic side of the membrane. Residues 12 to 32 (MAVTLVTVIIYLGVFIPLLII) traverse the membrane as a helical segment. Residues 33–438 (QETVPSAPDD…TVFAVFKLRT (406 aa)) are Vacuolar-facing. An N-linked (GlcNAc...) asparagine glycan is attached at Asn50. The segment at 114–135 (DAEAPESVPSPSNSNDGSAERY) is disordered. Asn157 is a glycosylation site (N-linked (GlcNAc...) asparagine). Residues His221 and Asp233 each contribute to the Zn(2+) site. Residue Glu267 is the Proton acceptor of the active site. Residues Glu268, Glu293, and His365 each contribute to the Zn(2+) site. Residues 439–459 (LFAWSLTLLIAAPLMLFAVSY) form a helical membrane-spanning segment. Residues 460 to 495 (LLNRQDKFYFFAGSIKAKGPEDEPISLGGWRGAFRY) are Cytoplasmic-facing. The helical transmembrane segment at 496–516 (PITLIITCAITFGCASLINKI) threads the bilayer. Over 517–526 (NPMIVYSSPY) the chain is Vacuolar. A helical transmembrane segment spans residues 527–547 (SVWSMSASLFFSIFWFIMAGC). The Cytoplasmic segment spans residues 548–557 (NFVRPSALQR). Residues 558 to 578 (GYAFMWLFVFGWIILVAATVY) form a helical membrane-spanning segment. Residues 579–585 (EDRFKIS) are Vacuolar-facing. A helical membrane pass occupies residues 586-606 (GGYLFVFYEAAIFLATLIAIG). The Cytoplasmic portion of the chain corresponds to 607–740 (EQFALPKKST…LPIWTWLVQY (134 aa)). Residues 621-686 (SQLDHDGNQD…IGGGAPTQRS (66 aa)) form a disordered region. Basic and acidic residues predominate over residues 622-633 (QLDHDGNQDSHH). Acidic residues predominate over residues 655 to 664 (GQEEDPEDNV). A helical transmembrane segment spans residues 741 to 761 (LLVGPFILIVVGQVGLFLVAA). The Vacuolar segment spans residues 762–773 (LHQTGTDGSPLL). A helical transmembrane segment spans residues 774–794 (LPYLVVAVFSILLLLPVTPFI). Residues 795–801 (HRLTHHM) are Cytoplasmic-facing. Residues 802 to 822 (PTFFFLVFIGTLIYNLVAFPF) form a helical membrane-spanning segment. The Vacuolar portion of the chain corresponds to 823 to 1049 (SPNNRYKAYF…LVEGSKRFVV (227 aa)). N-linked (GlcNAc...) asparagine glycosylation is present at Asn914.

The protein belongs to the peptidase M28 family. Zn(2+) is required as a cofactor.

The protein localises to the vacuole membrane. Its function is as follows. May be involved in vacuolar sorting and osmoregulation. This is Vacuolar membrane protease from Botryotinia fuckeliana (strain B05.10) (Noble rot fungus).